Reading from the N-terminus, the 423-residue chain is COP9 signalosome complex subunit 3 (423 aa).

The PCI domain occupies 197–365 (NFERAMYFYE…GMVCFHDSPE (169 aa)). Residues 401–410 (PQFVQKSMGS) show a composition bias toward polar residues. Positions 401–423 (PQFVQKSMGSQEDDSGSKPSSYS) are disordered.

It belongs to the CSN3 family. As to quaternary structure, component of the CSN complex, probably composed of cops1, cops2, cops3, cops4, cops5, cops6, cops7, cops8 and cops9.

Its subcellular location is the cytoplasm. It localises to the nucleus. Functionally, component of the COP9 signalosome complex (CSN), a complex involved in various cellular and developmental processes. The CSN complex is an essential regulator of the ubiquitin (Ubl) conjugation pathway by mediating the deneddylation of the cullin subunits of E3 ligase complexes, leading to modify the Ubl ligase activity. This is COP9 signalosome complex subunit 3 (cops3) from Xenopus laevis (African clawed frog).